Consider the following 544-residue polypeptide: T-complex protein 1 subunit gamma (544 aa).

Cys-368 and Cys-374 are joined by a disulfide. The segment at 525-544 is disordered; sequence SKKRGGNEPTNPAAMAQGQE.

This sequence belongs to the TCP-1 chaperonin family. In terms of assembly, heterooligomeric complex of about 850 to 900 kDa that forms two stacked rings, 12 to 16 nm in diameter.

It is found in the cytoplasm. Its function is as follows. Molecular chaperone; assists the folding of proteins upon ATP hydrolysis. Known to play a role, in vitro, in the folding of actin and tubulin. The chain is T-complex protein 1 subunit gamma from Drosophila melanogaster (Fruit fly).